The primary structure comprises 334 residues: Anthranilate phosphoribosyltransferase (334 aa).

Residues Gly81, 84 to 85 (GD), Thr89, 91 to 94 (NIST), 109 to 117 (KHGNRSVSS), and Ala121 each bind 5-phospho-alpha-D-ribose 1-diphosphate. Gly81 provides a ligand contact to anthranilate. Ser93 is a binding site for Mg(2+). Anthranilate is bound at residue Asn112. Arg167 contacts anthranilate. Mg(2+) is bound by residues Asp225 and Glu226.

It belongs to the anthranilate phosphoribosyltransferase family. Homodimer. Requires Mg(2+) as cofactor.

The enzyme catalyses N-(5-phospho-beta-D-ribosyl)anthranilate + diphosphate = 5-phospho-alpha-D-ribose 1-diphosphate + anthranilate. It functions in the pathway amino-acid biosynthesis; L-tryptophan biosynthesis; L-tryptophan from chorismate: step 2/5. In terms of biological role, catalyzes the transfer of the phosphoribosyl group of 5-phosphorylribose-1-pyrophosphate (PRPP) to anthranilate to yield N-(5'-phosphoribosyl)-anthranilate (PRA). This chain is Anthranilate phosphoribosyltransferase, found in Histophilus somni (strain 2336) (Haemophilus somnus).